A 785-amino-acid chain; its full sequence is MFSSMQILPLEAPPTDGKLGPLPPSQLTDQEVEERELQAEQNNSNLAPPAAVATHTRTIGIIHPPPDIRTIVEKTAQFVSKNGLEFEKRIIVSNEKNAKFNFLKSSDPYHAFYQHKLTEYRAQNKDGAQGTDDSDGTTDPQLDTGAADESEAGDTQPDLQAQFRIPSKPLEAPEPEKYTVRLPEGITGEELDIIKLTAQFVARNGKSFLTGLSNRENNNPQFHFMKPTHSMFTFFTSLVDAYSEVLMPPKDLKEKLRKSAADLTTVLERCLHRLEWDRSQEQQKKKEEDEKELERVQMAMIDWHDFVVVESIDFADEEDEELPPPMTLDEVIRRSKASAMEEDEIVEPGKEVEMEMDEEEVKLVAEGMRAANLEENVKIENVHDEEAPMRIVKNWKRPEDRIPTERDPTKVVISPITGELIPINEMSEHMRISLIDPKFKEQKDRMFAKIRETTLAQDDEIAKNIVGLARLRPDIFGTTEEEVSNAVKAEIEKKKDEQPKQVIWDGHTGSIGRTANQALSQNANGEEQGDGVYGDPNSFPGPAALPPPRPGVPIVRPLPPPPNLALNLPRPPPSAQYPGAPRPLGVPMMQPMHQQHQLTMPGPPGHPQMMMNRPPQMQPGMHVPPPPGSQFAHHMQIPRPYGQLPPSAMGMMQPPPMPGMAPPPPPEEAPPPLPEEPEAKRQKFDESALVPEDQFLAQHPGPATIRVSKPNENDGQFMEITVQSLSENVGSLKEKIAGEIQIPANKQKLSGKAGFLKDNMSLAHYNVGAGEILTLSLRERGGRKR.

At methionine 1 the chain carries N-acetylmethionine. Residues 1–42 (MFSSMQILPLEAPPTDGKLGPLPPSQLTDQEVEERELQAEQN) are disordered. The stretch at 71 to 113 (IVEKTAQFVSKNGLEFEKRIIVSNEKNAKFNFLKSSDPYHAFY) is one SURP motif 1 repeat. Residues 124–175 (NKDGAQGTDDSDGTTDPQLDTGAADESEAGDTQPDLQAQFRIPSKPLEAPEP) are disordered. One copy of the SURP motif 2 repeat lies at 193 to 235 (IIKLTAQFVARNGKSFLTGLSNRENNNPQFHFMKPTHSMFTFF). Disordered stretches follow at residues 522-554 (NANG…GVPI) and 639-713 (RPYG…PNEN). 2 stretches are compositionally biased toward pro residues: residues 543-554 (AALPPPRPGVPI) and 653-674 (QPPP…PPLP). The segment covering 677–686 (PEAKRQKFDE) has biased composition (basic and acidic residues). The Ubiquitin-like domain occupies 707-782 (VSKPNENDGQ…LTLSLRERGG (76 aa)).

As to quaternary structure, component of splicing factor SF3A which is composed of three subunits.

Its subcellular location is the nucleus. The polypeptide is Probable splicing factor 3A subunit 1 (Arabidopsis thaliana (Mouse-ear cress)).